Consider the following 101-residue polypeptide: Large ribosomal subunit protein P1 (101 aa).

A disordered region spans residues 65–89 (AAPAAAPAEEPKEEKKEEKKEEDTT). The segment covering 73–87 (EEPKEEKKEEKKEED) has biased composition (basic and acidic residues).

The protein belongs to the eukaryotic ribosomal protein P1/P2 family. As to quaternary structure, part of the 50S ribosomal subunit. Homodimer, it forms part of the ribosomal stalk which helps the ribosome interact with GTP-bound translation factors. Forms a heptameric uL10/P0(P1)2(P1)2(P1)2 complex, where uL10/P0 forms an elongated spine to which the P1 dimers bind in a sequential fashion.

Forms part of the ribosomal stalk, playing a central role in the interaction of the ribosome with GTP-bound translation factors. The sequence is that of Large ribosomal subunit protein P1 from Methanothermococcus thermolithotrophicus (Methanococcus thermolithotrophicus).